A 309-amino-acid polypeptide reads, in one-letter code: Tagatose-6-phosphate kinase (309 aa).

The protein belongs to the carbohydrate kinase PfkB family. LacC subfamily.

The enzyme catalyses D-tagatofuranose 6-phosphate + ATP = D-tagatofuranose 1,6-bisphosphate + ADP + H(+). It functions in the pathway carbohydrate metabolism; D-tagatose 6-phosphate degradation; D-glyceraldehyde 3-phosphate and glycerone phosphate from D-tagatose 6-phosphate: step 1/2. The polypeptide is Tagatose-6-phosphate kinase (Streptococcus pyogenes serotype M5 (strain Manfredo)).